A 731-amino-acid chain; its full sequence is 1,4-alpha-glucan branching enzyme GlgB (731 aa).

The Nucleophile role is filled by aspartate 412. Glutamate 465 acts as the Proton donor in catalysis.

This sequence belongs to the glycosyl hydrolase 13 family. GlgB subfamily. As to quaternary structure, monomer.

It carries out the reaction Transfers a segment of a (1-&gt;4)-alpha-D-glucan chain to a primary hydroxy group in a similar glucan chain.. Its pathway is glycan biosynthesis; glycogen biosynthesis. Functionally, catalyzes the formation of the alpha-1,6-glucosidic linkages in glycogen by scission of a 1,4-alpha-linked oligosaccharide from growing alpha-1,4-glucan chains and the subsequent attachment of the oligosaccharide to the alpha-1,6 position. This is 1,4-alpha-glucan branching enzyme GlgB from Bordetella pertussis (strain Tohama I / ATCC BAA-589 / NCTC 13251).